A 333-amino-acid chain; its full sequence is MKPFATHPDAIPADLQDVMDRLGSVAIEVATRIARGGIDEDLAGLCGTNTDGDGQKALDVIADDAFRAALEGSAVRFYASEEQEEAVTLNEAGTLALAIDPLDGSSNIDTNLSVGTIFAIWPAAATAETSFLRPGSDLIAGGYIIYGPQVCLMVSFGQGTQKYVLDPGSRSFVLVDRAVKVPPASTEFAINASNYRHWSKPIRAYIDDCVAGTEGPRGRNFNMRWLASLVAETHRILARGGVFLYPRDGRKGYEQGRLRYLYECAPIAFVITQAGGGATDGENPILGQTPARLHARTPFIFGSAEKVARITAYHDLPEQETSALFGNRGLFRS.

The Mg(2+) site is built by Glu-81, Asp-100, Leu-102, and Asp-103. Substrate is bound by residues 103-106 (DGSS) and Asn-191. Glu-263 contributes to the Mg(2+) binding site.

It belongs to the FBPase class 1 family. Homotetramer. It depends on Mg(2+) as a cofactor.

It localises to the cytoplasm. It carries out the reaction beta-D-fructose 1,6-bisphosphate + H2O = beta-D-fructose 6-phosphate + phosphate. Its pathway is carbohydrate biosynthesis; Calvin cycle. This is Fructose-1,6-bisphosphatase class 1 1 from Cereibacter sphaeroides (strain ATCC 17025 / ATH 2.4.3) (Rhodobacter sphaeroides).